The chain runs to 50 residues: Large ribosomal subunit protein bL33 (50 aa).

It belongs to the bacterial ribosomal protein bL33 family.

The protein is Large ribosomal subunit protein bL33 (rpmG) of Aquifex aeolicus (strain VF5).